A 145-amino-acid polypeptide reads, in one-letter code: Small ribosomal subunit protein uS19 (145 aa).

Residue Ala-2 is modified to N-acetylalanine. A Glycyl lysine isopeptide (Lys-Gly) (interchain with G-Cter in SUMO2) cross-link involves residue Lys-108.

It belongs to the universal ribosomal protein uS19 family. As to quaternary structure, component of the small ribosomal subunit.

The protein localises to the cytoplasm. Component of the small ribosomal subunit. The ribosome is a large ribonucleoprotein complex responsible for the synthesis of proteins in the cell. The chain is Small ribosomal subunit protein uS19 (RPS15) from Oryctolagus cuniculus (Rabbit).